Reading from the N-terminus, the 865-residue chain is LINE-1 type transposase domain-containing protein 1 (865 aa).

Position 2 is an N-acetylserine (Ser2). Ser2 bears the Phosphoserine mark. Thr149 is modified (phosphothreonine). Ser154 is modified (phosphoserine). The tract at residues 370–508 (EMKNLETQEE…EKKASRRQKE (139 aa)) is disordered. 2 stretches are compositionally biased toward acidic residues: residues 376–440 (TQEE…EQTS) and 472–483 (SVEDSESEEEEE). A phosphoserine mark is found at Ser472, Ser476, and Ser478. The segment covering 498–508 (TEKKASRRQKE) has biased composition (basic and acidic residues). Phosphoserine is present on residues Ser518, Ser561, and Ser573. Positions 590–608 (EEKKHRTLHTEELTSKEAD) are enriched in basic and acidic residues. Residues 590–612 (EEKKHRTLHTEELTSKEADLTEE) form a disordered region. 3 positions are modified to phosphoserine: Ser640, Ser648, and Ser665. The stretch at 642–684 (VLEIENSVDDLSSRMDILEERIDSLEDQIEEFSKDTMQMTKQI) forms a coiled coil.

It belongs to the transposase 22 family.

The sequence is that of LINE-1 type transposase domain-containing protein 1 (L1TD1) from Homo sapiens (Human).